The primary structure comprises 239 residues: Uridylate kinase (239 aa).

An ATP-binding site is contributed by 10–13 (KFSG). Residues 18–23 (GENGFG) form an involved in allosteric activation by GTP region. G52 is a UMP binding site. G53 and R57 together coordinate ATP. Residues D73 and 134–141 (TGNPYFTT) contribute to the UMP site. Residues T161, Y167, and D170 each contribute to the ATP site.

The protein belongs to the UMP kinase family. As to quaternary structure, homohexamer.

It is found in the cytoplasm. The catalysed reaction is UMP + ATP = UDP + ADP. Its pathway is pyrimidine metabolism; CTP biosynthesis via de novo pathway; UDP from UMP (UMPK route): step 1/1. With respect to regulation, allosterically activated by GTP. Inhibited by UTP. Functionally, catalyzes the reversible phosphorylation of UMP to UDP. This is Uridylate kinase from Campylobacter jejuni subsp. doylei (strain ATCC BAA-1458 / RM4099 / 269.97).